A 248-amino-acid polypeptide reads, in one-letter code: UPF0524 protein C3orf70 homolog (248 aa).

The interval 169-248 (KESDTPKLGH…EVIETMETTV (80 aa)) is disordered. The segment covering 200-227 (SCDEDTEEGAELSSEEDYSPESSWEPDE) has biased composition (acidic residues).

The protein belongs to the UPF0524 family.

May play a role in neuronal and neurobehavioral development. In Mus musculus (Mouse), this protein is UPF0524 protein C3orf70 homolog.